A 284-amino-acid polypeptide reads, in one-letter code: MLVVNNPLVLREQISLWRREGRSIAFVPTMGNLHQGHLTLVEQARSHAEKVVVSIFVNPMQFDKAEDLANYPRTLEEDCAALNAAGVDLVFTPTPEIMYPQGLASQTFVEVPGLSGLLEGALRPGHFRGVSTVVTKLFNLVQPDVACFGQKDYQQLALIRKMVADMAMPIEIVGVPTVRAEDGLALSSRNGYLTTAERALAPELARTMNWIAEQIEGGDHHLPSLVAQASQRLDNAGFRTDAIDIVDATTLESATDKSRHLVILMAAYLGKARLIDNRVVMLSA.

30-37 serves as a coordination point for ATP; it reads MGNLHQGH. The Proton donor role is filled by His37. Gln61 serves as a coordination point for (R)-pantoate. Beta-alanine is bound at residue Gln61. Residue 149-152 participates in ATP binding; sequence GQKD. Gln155 contributes to the (R)-pantoate binding site. Residues Val178 and 186-189 contribute to the ATP site; that span reads LSSR.

The protein belongs to the pantothenate synthetase family. Homodimer.

It localises to the cytoplasm. The enzyme catalyses (R)-pantoate + beta-alanine + ATP = (R)-pantothenate + AMP + diphosphate + H(+). It participates in cofactor biosynthesis; (R)-pantothenate biosynthesis; (R)-pantothenate from (R)-pantoate and beta-alanine: step 1/1. Its function is as follows. Catalyzes the condensation of pantoate with beta-alanine in an ATP-dependent reaction via a pantoyl-adenylate intermediate. This Aeromonas salmonicida (strain A449) protein is Pantothenate synthetase.